Here is a 432-residue protein sequence, read N- to C-terminus: Mitochondrial distribution and morphology protein 12 (432 aa).

The SMP-LTD domain maps to 1–432 (MSIEVDWRAA…VFPSFWTFLI (432 aa)). Disordered regions lie at residues 182–273 (WTDP…PRMR) and 354–377 (QQEA…PKRQ). The span at 214-234 (TSNPTSRPSTSSTLPSHPSAS) shows a compositional bias: low complexity. Basic and acidic residues-rich tracts occupy residues 243 to 253 (TGKEHGSLAED) and 355 to 364 (QEARGQDDRP).

It belongs to the MDM12 family. In terms of assembly, component of the ER-mitochondria encounter structure (ERMES) or MDM complex, composed of mmm1, mdm10, mdm12 and mdm34. A mmm1 homodimer associates with one molecule of mdm12 on each side in a pairwise head-to-tail manner, and the SMP-LTD domains of mmm1 and mdm12 generate a continuous hydrophobic tunnel for phospholipid trafficking.

Its subcellular location is the mitochondrion outer membrane. The protein resides in the endoplasmic reticulum membrane. Its function is as follows. Component of the ERMES/MDM complex, which serves as a molecular tether to connect the endoplasmic reticulum (ER) and mitochondria. Components of this complex are involved in the control of mitochondrial shape and protein biogenesis, and function in nonvesicular lipid trafficking between the ER and mitochondria. Mdm12 is required for the interaction of the ER-resident membrane protein MMM1 and the outer mitochondrial membrane-resident beta-barrel protein mdm10. The mdm12-mmm1 subcomplex functions in the major beta-barrel assembly pathway that is responsible for biogenesis of all mitochondrial outer membrane beta-barrel proteins, and acts in a late step after the SAM complex. The mdm10-mdm12-mmm1 subcomplex further acts in the TOM40-specific pathway after the action of the mdm12-mmm1 complex. Essential for establishing and maintaining the structure of mitochondria and maintenance of mtDNA nucleoids. The chain is Mitochondrial distribution and morphology protein 12 from Aspergillus flavus (strain ATCC 200026 / FGSC A1120 / IAM 13836 / NRRL 3357 / JCM 12722 / SRRC 167).